Here is a 332-residue protein sequence, read N- to C-terminus: Anthranilate phosphoribosyltransferase (332 aa).

5-phospho-alpha-D-ribose 1-diphosphate-binding positions include glycine 79, 82–83 (GD), threonine 87, 89–92 (NIST), 107–115 (KHGNRSVSS), and serine 119. Glycine 79 is a binding site for anthranilate. Residue serine 91 coordinates Mg(2+). Anthranilate is bound at residue asparagine 110. Arginine 165 provides a ligand contact to anthranilate. Mg(2+) contacts are provided by aspartate 223 and glutamate 224.

Belongs to the anthranilate phosphoribosyltransferase family. As to quaternary structure, homodimer. It depends on Mg(2+) as a cofactor.

It carries out the reaction N-(5-phospho-beta-D-ribosyl)anthranilate + diphosphate = 5-phospho-alpha-D-ribose 1-diphosphate + anthranilate. It functions in the pathway amino-acid biosynthesis; L-tryptophan biosynthesis; L-tryptophan from chorismate: step 2/5. In terms of biological role, catalyzes the transfer of the phosphoribosyl group of 5-phosphorylribose-1-pyrophosphate (PRPP) to anthranilate to yield N-(5'-phosphoribosyl)-anthranilate (PRA). The protein is Anthranilate phosphoribosyltransferase of Vibrio vulnificus (strain CMCP6).